We begin with the raw amino-acid sequence, 96 residues long: Invertase 7 (96 aa).

The signal sequence occupies residues 1–19; it reads MLLQAFIFLLAGFAAKISA. A glycan (N-linked (GlcNAc...) asparagine) is linked at Asn23. Residues 39–42 and Gln60 each bind substrate; that span reads WMND. The active site involves Asp42. Residues Asn64 and Asn76 are each glycosylated (N-linked (GlcNAc...) asparagine).

This sequence belongs to the glycosyl hydrolase 32 family.

The catalysed reaction is Hydrolysis of terminal non-reducing beta-D-fructofuranoside residues in beta-D-fructofuranosides.. This chain is Invertase 7 (SUC7), found in Saccharomyces cerevisiae (Baker's yeast).